Here is an 82-residue protein sequence, read N- to C-terminus: Neuropeptide-like peptide 36 (82 aa).

The sequence is that of Neuropeptide-like peptide 36 (nlp-36) from Caenorhabditis elegans.